A 227-amino-acid polypeptide reads, in one-letter code: Cytochrome c oxidase subunit 2 (227 aa).

Over methionine 1 to serine 14 the chain is Mitochondrial intermembrane. The helical transmembrane segment at proline 15–methionine 45 threads the bilayer. At leucine 46 to glutamine 59 the chain is on the mitochondrial matrix side. The chain crosses the membrane as a helical span at residues glutamate 60 to methionine 87. The Mitochondrial intermembrane portion of the chain corresponds to aspartate 88–leucine 227. Residues histidine 161, cysteine 196, glutamate 198, cysteine 200, histidine 204, and methionine 207 each contribute to the Cu cation site. Glutamate 198 lines the Mg(2+) pocket.

It belongs to the cytochrome c oxidase subunit 2 family. Component of the cytochrome c oxidase (complex IV, CIV), a multisubunit enzyme composed of 14 subunits. The complex is composed of a catalytic core of 3 subunits MT-CO1, MT-CO2 and MT-CO3, encoded in the mitochondrial DNA, and 11 supernumerary subunits COX4I, COX5A, COX5B, COX6A, COX6B, COX6C, COX7A, COX7B, COX7C, COX8 and NDUFA4, which are encoded in the nuclear genome. The complex exists as a monomer or a dimer and forms supercomplexes (SCs) in the inner mitochondrial membrane with NADH-ubiquinone oxidoreductase (complex I, CI) and ubiquinol-cytochrome c oxidoreductase (cytochrome b-c1 complex, complex III, CIII), resulting in different assemblies (supercomplex SCI(1)III(2)IV(1) and megacomplex MCI(2)III(2)IV(2)). Found in a complex with TMEM177, COA6, COX18, COX20, SCO1 and SCO2. Interacts with TMEM177 in a COX20-dependent manner. Interacts with COX20. Interacts with COX16. It depends on Cu cation as a cofactor.

It localises to the mitochondrion inner membrane. The enzyme catalyses 4 Fe(II)-[cytochrome c] + O2 + 8 H(+)(in) = 4 Fe(III)-[cytochrome c] + 2 H2O + 4 H(+)(out). Functionally, component of the cytochrome c oxidase, the last enzyme in the mitochondrial electron transport chain which drives oxidative phosphorylation. The respiratory chain contains 3 multisubunit complexes succinate dehydrogenase (complex II, CII), ubiquinol-cytochrome c oxidoreductase (cytochrome b-c1 complex, complex III, CIII) and cytochrome c oxidase (complex IV, CIV), that cooperate to transfer electrons derived from NADH and succinate to molecular oxygen, creating an electrochemical gradient over the inner membrane that drives transmembrane transport and the ATP synthase. Cytochrome c oxidase is the component of the respiratory chain that catalyzes the reduction of oxygen to water. Electrons originating from reduced cytochrome c in the intermembrane space (IMS) are transferred via the dinuclear copper A center (CU(A)) of subunit 2 and heme A of subunit 1 to the active site in subunit 1, a binuclear center (BNC) formed by heme A3 and copper B (CU(B)). The BNC reduces molecular oxygen to 2 water molecules using 4 electrons from cytochrome c in the IMS and 4 protons from the mitochondrial matrix. This chain is Cytochrome c oxidase subunit 2 (MT-CO2), found in Ceratotherium simum (White rhinoceros).